The primary structure comprises 204 residues: Probable nicotinate-nucleotide adenylyltransferase (204 aa).

Belongs to the NadD family.

It carries out the reaction nicotinate beta-D-ribonucleotide + ATP + H(+) = deamido-NAD(+) + diphosphate. The protein operates within cofactor biosynthesis; NAD(+) biosynthesis; deamido-NAD(+) from nicotinate D-ribonucleotide: step 1/1. In terms of biological role, catalyzes the reversible adenylation of nicotinate mononucleotide (NaMN) to nicotinic acid adenine dinucleotide (NaAD). The polypeptide is Probable nicotinate-nucleotide adenylyltransferase (Dehalococcoides mccartyi (strain CBDB1)).